We begin with the raw amino-acid sequence, 241 residues long: Peroxisomal membrane protein 11C (241 aa).

Over Met1–Arg124 the chain is Cytoplasmic. A helical transmembrane segment spans residues Trp125–Leu149. Over Lys150 to Pro211 the chain is Lumenal. Residues Trp212–Tyr227 form a helical membrane-spanning segment. Topologically, residues Gln228 to Pro241 are cytoplasmic.

Belongs to the peroxin-11 family. As to quaternary structure, homodimer. Heterodimer with either PEX11A or PEX11B. Interacts with FIS1.

Its subcellular location is the peroxisome membrane. Its function is as follows. Promotes membrane protrusion and elongation on the peroxisomal surface. The protein is Peroxisomal membrane protein 11C (PEX11G) of Homo sapiens (Human).